The primary structure comprises 79 residues: Eumenine mastoparan-OD (79 aa).

An N-terminal signal peptide occupies residues 1–24 (MKQTIVIVLLAAVAMMACLQMVAA). AXPX repeat units follow at residues 24-27 (AEPL), 30-33 (AAPA), 44-47 (ASPI), 52-55 (ANPE), and 58-61 (ASPE). Residues 25 to 62 (EPLPEAAPAPSPLAEAEALASPIAEALANPEALASPEA) constitute a propeptide that is removed on maturation. At L76 the chain carries Leucine amide.

As to expression, expressed by the venom gland.

The protein resides in the secreted. It localises to the target cell membrane. In terms of biological role, antimicrobial peptide with strong activity against the fungi C.albicans (MIC=6 uM) and B.cinerea (MIC=10 uM), and weaker activity against the Gram-negative bacterium E.coli (MIC=97 uM) and Gram-positive bacterium S.aureus (MIC=97 uM). Shows cytolytic activity against insect cell lines. Has potent hemolytic activity against ovine erythrocytes (80% at 50 uM), but has no hemolytic activity against human erythrocytes. In vivo, peptide injection in the vicinity of the head and thorax of lepidopteran larvae induces feeding disorder that lasts one or two days before recovering. This is Eumenine mastoparan-OD from Orancistrocerus drewseni (Solitary wasp).